A 186-amino-acid chain; its full sequence is Elongation factor P (186 aa).

The protein belongs to the elongation factor P family.

It localises to the cytoplasm. It participates in protein biosynthesis; polypeptide chain elongation. Its function is as follows. Involved in peptide bond synthesis. Stimulates efficient translation and peptide-bond synthesis on native or reconstituted 70S ribosomes in vitro. Probably functions indirectly by altering the affinity of the ribosome for aminoacyl-tRNA, thus increasing their reactivity as acceptors for peptidyl transferase. The chain is Elongation factor P from Crocosphaera subtropica (strain ATCC 51142 / BH68) (Cyanothece sp. (strain ATCC 51142)).